The chain runs to 237 residues: Protein GrpE (237 aa).

Residues 1–65 (MTDSYKLPDN…DAREDDRDPT (65 aa)) are disordered. Residues 55-65 (VDAREDDRDPT) show a composition bias toward basic and acidic residues.

Belongs to the GrpE family. In terms of assembly, homodimer.

The protein resides in the cytoplasm. In terms of biological role, participates actively in the response to hyperosmotic and heat shock by preventing the aggregation of stress-denatured proteins, in association with DnaK and GrpE. It is the nucleotide exchange factor for DnaK and may function as a thermosensor. Unfolded proteins bind initially to DnaJ; upon interaction with the DnaJ-bound protein, DnaK hydrolyzes its bound ATP, resulting in the formation of a stable complex. GrpE releases ADP from DnaK; ATP binding to DnaK triggers the release of the substrate protein, thus completing the reaction cycle. Several rounds of ATP-dependent interactions between DnaJ, DnaK and GrpE are required for fully efficient folding. This Corynebacterium efficiens (strain DSM 44549 / YS-314 / AJ 12310 / JCM 11189 / NBRC 100395) protein is Protein GrpE.